The chain runs to 349 residues: Isopentenyl-diphosphate delta-isomerase (349 aa).

6 to 7 (RK) serves as a coordination point for substrate. Residues 62 to 64 (AMT), Ser-93, and Asn-122 contribute to the FMN site. Substrate is bound at residue Gln-152. Glu-153 contacts Mg(2+). Residues Lys-184, Thr-214, 258-259 (GG), and 280-281 (AG) contribute to the FMN site.

This sequence belongs to the IPP isomerase type 2 family. Homooctamer. Dimer of tetramers. It depends on FMN as a cofactor. The cofactor is NADPH. Requires Mg(2+) as cofactor.

The protein localises to the cytoplasm. It catalyses the reaction isopentenyl diphosphate = dimethylallyl diphosphate. Involved in the biosynthesis of isoprenoids. Catalyzes the 1,3-allylic rearrangement of the homoallylic substrate isopentenyl (IPP) to its allylic isomer, dimethylallyl diphosphate (DMAPP). The chain is Isopentenyl-diphosphate delta-isomerase from Bacillus cereus (strain AH820).